The chain runs to 187 residues: Adenylate kinase (187 aa).

10–15 (GSGKGT) contacts ATP. An NMP region spans residues 30 to 59 (STGDLLRAEVAAGSPLGLKAKEVMARGDLV). AMP contacts are provided by residues Thr-31, Arg-36, 57-59 (DLV), 85-88 (GYPR), and Gln-92. Positions 126–136 (GRAKAEGREDD) are LID. Arg-127 lines the ATP pocket. Residues Arg-133 and Arg-144 each coordinate AMP. Residue Gly-172 participates in ATP binding.

It belongs to the adenylate kinase family. In terms of assembly, monomer.

The protein resides in the cytoplasm. It catalyses the reaction AMP + ATP = 2 ADP. The protein operates within purine metabolism; AMP biosynthesis via salvage pathway; AMP from ADP: step 1/1. Catalyzes the reversible transfer of the terminal phosphate group between ATP and AMP. Plays an important role in cellular energy homeostasis and in adenine nucleotide metabolism. This Xanthomonas axonopodis pv. citri (strain 306) protein is Adenylate kinase.